Here is a 170-residue protein sequence, read N- to C-terminus: Crossover junction endodeoxyribonuclease RuvC (170 aa).

Active-site residues include aspartate 11, glutamate 71, and aspartate 143. Residues aspartate 11, glutamate 71, and aspartate 143 each contribute to the Mg(2+) site.

The protein belongs to the RuvC family. As to quaternary structure, homodimer which binds Holliday junction (HJ) DNA. The HJ becomes 2-fold symmetrical on binding to RuvC with unstacked arms; it has a different conformation from HJ DNA in complex with RuvA. In the full resolvosome a probable DNA-RuvA(4)-RuvB(12)-RuvC(2) complex forms which resolves the HJ. Requires Mg(2+) as cofactor.

The protein resides in the cytoplasm. It catalyses the reaction Endonucleolytic cleavage at a junction such as a reciprocal single-stranded crossover between two homologous DNA duplexes (Holliday junction).. Functionally, the RuvA-RuvB-RuvC complex processes Holliday junction (HJ) DNA during genetic recombination and DNA repair. Endonuclease that resolves HJ intermediates. Cleaves cruciform DNA by making single-stranded nicks across the HJ at symmetrical positions within the homologous arms, yielding a 5'-phosphate and a 3'-hydroxyl group; requires a central core of homology in the junction. The consensus cleavage sequence is 5'-(A/T)TT(C/G)-3'. Cleavage occurs on the 3'-side of the TT dinucleotide at the point of strand exchange. HJ branch migration catalyzed by RuvA-RuvB allows RuvC to scan DNA until it finds its consensus sequence, where it cleaves and resolves the cruciform DNA. The polypeptide is Crossover junction endodeoxyribonuclease RuvC (Rhizobium meliloti (strain 1021) (Ensifer meliloti)).